Here is a 306-residue protein sequence, read N- to C-terminus: C-type lectin domain family 10 member A (306 aa).

At 1 to 37 (MTMAYENFQNLGSEEKNQEAGKAPPQSFLCNILSWTH) the chain is on the cytoplasmic side. The chain crosses the membrane as a helical; Signal-anchor for type II membrane protein span at residues 38-58 (LLLFSLGLSLLLLVVISVIGS). Topologically, residues 59 to 306 (QNSQLRRDLE…VCEMKLAKDS (248 aa)) are extracellular. Residues N76 and N168 are each glycosylated (N-linked (GlcNAc...) asparagine). Positions 174-300 (CCPLHWMEHE…QRPYRWVCEM (127 aa)) constitute a C-type lectin domain. 3 disulfides stabilise this stretch: C175-C186, C203-C298, and C276-C290.

In terms of assembly, homooligomer.

The protein resides in the membrane. Recognizes terminal galactose and N-acetylgalactosamine units. The sequence is that of C-type lectin domain family 10 member A (Clec10a) from Rattus norvegicus (Rat).